Consider the following 1439-residue polypeptide: Receptor-type tyrosine-protein phosphatase kappa (1439 aa).

The signal sequence occupies residues 1 to 26 (MDTTAAAALPAFVALLLLSPWPLLGS). Topologically, residues 27 to 752 (AQGQFSAGGC…PAKQTDRVVK (726 aa)) are extracellular. Residues 31–194 (FSAGGCTFDD…IQVLSYPCDK (164 aa)) form the MAM domain. N-linked (GlcNAc...) asparagine glycans are attached at residues N101, N140, and N211. Residues 196 to 281 (PHFLRLGDVE…TQSERGSGVS (86 aa)) form the Ig-like C2-type domain. An intrachain disulfide couples C216 to C270. 4 Fibronectin type-III domains span residues 294-389 (PIAP…CAEP), 392-488 (TPKT…TDED), 491-595 (GPVP…SAPT), and 597-680 (PDYE…GNLP). N416, N424, N436, N462, N552, N586, N590, N607, and N690 each carry an N-linked (GlcNAc...) asparagine glycan. The chain crosses the membrane as a helical span at residues 753 to 774 (IAGISAGILVFILLLLVVILIV). Over 775–1439 (KKSKLAKKRK…DVALEYLESS (665 aa)) the chain is Cytoplasmic. Phosphoserine is present on S856. Tyrosine-protein phosphatase domains lie at 887-1141 (FKEE…ILEA) and 1173-1435 (LKDE…ALEY). Substrate-binding positions include D1050, 1082 to 1088 (CSAGAGR), and Q1126. The Phosphocysteine intermediate role is filled by C1082. C1376 serves as the catalytic Phosphocysteine intermediate.

The protein belongs to the protein-tyrosine phosphatase family. Receptor class 2B subfamily. This protein undergoes proteolytic processing. In terms of tissue distribution, high levels in lung, brain and colon; less in liver, pancreas, stomach, kidney, placenta and mammary carcinoma.

It localises to the cell junction. Its subcellular location is the adherens junction. It is found in the cell membrane. It catalyses the reaction O-phospho-L-tyrosyl-[protein] + H2O = L-tyrosyl-[protein] + phosphate. Functionally, regulation of processes involving cell contact and adhesion such as growth control, tumor invasion, and metastasis. Negative regulator of EGFR signaling pathway. Forms complexes with beta-catenin and gamma-catenin/plakoglobin. Beta-catenin may be a substrate for the catalytic activity of PTPRK/PTP-kappa. This chain is Receptor-type tyrosine-protein phosphatase kappa (PTPRK), found in Homo sapiens (Human).